We begin with the raw amino-acid sequence, 309 residues long: Ribosomal RNA small subunit methyltransferase H (309 aa).

S-adenosyl-L-methionine-binding positions include 33-35 (GGH), Asp-53, Phe-79, Asp-100, and Gln-107.

It belongs to the methyltransferase superfamily. RsmH family.

The protein localises to the cytoplasm. The catalysed reaction is cytidine(1402) in 16S rRNA + S-adenosyl-L-methionine = N(4)-methylcytidine(1402) in 16S rRNA + S-adenosyl-L-homocysteine + H(+). In terms of biological role, specifically methylates the N4 position of cytidine in position 1402 (C1402) of 16S rRNA. The protein is Ribosomal RNA small subunit methyltransferase H of Clostridium botulinum (strain Kyoto / Type A2).